The sequence spans 474 residues: Sulfide dehydrogenase subunit alpha (474 aa).

Residues 1-2 constitute a propeptide that is removed on maturation; that stretch reads MP. [4Fe-4S] cluster is bound by residues Cys42, Cys45, Cys52, and Cys56. Residues Cys101, Cys107, and Cys111 each contribute to the [3Fe-4S] cluster site.

In terms of assembly, heterodimer of alpha and beta subunits. FAD serves as cofactor. It depends on [3Fe-4S] cluster as a cofactor. [4Fe-4S] cluster is required as a cofactor.

It is found in the cytoplasm. It catalyses the reaction n sulfur + hydrogen sulfide + NADP(+) = (n+1) sulfur + NADPH. It carries out the reaction 2 reduced [2Fe-2S]-[ferredoxin] + NADP(+) + H(+) = 2 oxidized [2Fe-2S]-[ferredoxin] + NADPH. Its function is as follows. A bifunctional enzyme that catalyzes the reduction of elemental sulfur or polysulfide to hydrogen sulfide with NADPH as electron donor. Also functions as a reduced ferredoxin:NADP oxidoreductase with a very high affinity for reduced ferredoxin. Exhibits a broad specificity for various physiological and non-physiological substrates with varied reduction potentials such as methyl viologen, benzyl viologen, FAD, FMN, methylene blue, 2,6-dichlorophenolindophenol (DCIP), cytochrome C and ferricyanide with highest preference for benzyl viologen. Does not reduce fumarate, succinate, nitrate, nitrite, sulfate, sulfite or protons. Does not possess any hydrogenase activity or NADPH-dependent glutamate synthase activity. The chain is Sulfide dehydrogenase subunit alpha from Pyrococcus furiosus (strain ATCC 43587 / DSM 3638 / JCM 8422 / Vc1).